Reading from the N-terminus, the 258-residue chain is Heat-labile enterotoxin A chain (258 aa).

Residues 1–18 (MKNITFIFFILLASPLYA) form the signal peptide. Residue 25-39 (RADSRPPDEIKRSGG) coordinates NAD(+). The active site involves E128. A disulfide bridge connects residues C205 and C217.

Belongs to the enterotoxin A family. In terms of assembly, heterohexamer of one A chain and of five B chains.

Functionally, the biological activity of the toxin is produced by the A chain, which activates intracellular adenyl cyclase. The protein is Heat-labile enterotoxin A chain (eltA) of Escherichia coli O78:H11 (strain H10407 / ETEC).